The chain runs to 348 residues: MSIEWIQGACAVPDARVQAAALARQEQLTKPPGALGRLEQLAVQFAAWQRNEQPTVQRIWIAVYAADHGVAAEGVSMFPQAVTGEMVRNFARGGAAIAVLARELGARLEVVNLGVVNDPGELSRVRRAWIAPACANICEQAAMTPAQLRDALAAGAESIAQARTCGTQLFVGGEMGIGNSTAAAALSCALLSQFPQAMAGAGTGLDAEGIAHKATVITRALAVHADAATPLERLRRLGGFEIAALVGAYIAAAQAGIPVLVDGFISTAAALVAVHLNPGVREWLLFGHRSQERGHAALLRALEAEPLLQLDLRLGEASGAAVAIPLLRTACALHNGMATFAEAGVSDA.

Glutamate 316 serves as the catalytic Proton acceptor.

It belongs to the CobT family.

The catalysed reaction is 5,6-dimethylbenzimidazole + nicotinate beta-D-ribonucleotide = alpha-ribazole 5'-phosphate + nicotinate + H(+). The protein operates within nucleoside biosynthesis; alpha-ribazole biosynthesis; alpha-ribazole from 5,6-dimethylbenzimidazole: step 1/2. Its function is as follows. Catalyzes the synthesis of alpha-ribazole-5'-phosphate from nicotinate mononucleotide (NAMN) and 5,6-dimethylbenzimidazole (DMB). The sequence is that of Nicotinate-nucleotide--dimethylbenzimidazole phosphoribosyltransferase from Xanthomonas campestris pv. campestris (strain B100).